Reading from the N-terminus, the 417-residue chain is MRFAWTVLLLGPLQLCALVHCAPPAAGQQQPPREPPAAPGAWRQQIQWENNGQVFSLLSLGSQYQPQRRRDPGAAVPGAANASAQQPRTPILLIRDNRTAAARTRTAGSSGVTAGRPRPTARHWFQAGYSTSRAREAGASRAENQTAPGEVPALSNLRPPSRVDGMVGDDPYNPYKYSDDNPYYNYYDTYERPRPGGRYRPGYGTGYFQYGLPDLVADPYYIQASTYVQKMSMYNLRCAAEENCLASTAYRADVRDYDHRVLLRFPQRVKNQGTSDFLPSRPRYSWEWHSCHQHYHSMDEFSHYDLLDANTQRRVAEGHKASFCLEDTSCDYGYHRRFACTAHTQGLSPGCYDTYGADIDCQWIDITDVKPGNYILKVSVNPSYLVPESDYTNNVVRCDIRYTGHHAYASGCTISPY.

The N-terminal stretch at 1 to 21 (MRFAWTVLLLGPLQLCALVHC) is a signal peptide. The propeptide at 22-168 (APPAAGQQQP…PPSRVDGMVG (147 aa)) is removed by BMP1. The disordered stretch occupies residues 64–89 (YQPQRRRDPGAAVPGAANASAQQPRT). Residues 73 to 84 (GAAVPGAANASA) show a composition bias toward low complexity. 3 N-linked (GlcNAc...) asparagine glycosylation sites follow: N81, N97, and N144. Residues 137 to 174 (AGASRAENQTAPGEVPALSNLRPPSRVDGMVGDDPYNP) are disordered. Y187 carries the post-translational modification Sulfotyrosine. A lysyl-oxidase like region spans residues 213-417 (PDLVADPYYI…YASGCTISPY (205 aa)). 5 disulfides stabilise this stretch: C238-C244, C291-C340, C324-C330, C351-C361, and C398-C412. Positions 292, 294, and 296 each coordinate Cu cation. A cross-link (lysine tyrosylquinone (Lys-Tyr)) is located at residues 320 to 355 (KASFCLEDTSCDYGYHRRFACTAHTQGLSPGCYDTY). Y355 carries the 2',4',5'-topaquinone modification.

This sequence belongs to the lysyl oxidase family. Interacts with MFAP4. Interacts (via propeptide) with EFEMP2; this interaction is strong and facilitates formation of ternary complexes with ELN during elastic fiber assembly; this interaction limits interaction of EFEMP2 with FBLN5. Cu cation is required as a cofactor. It depends on lysine tyrosylquinone residue as a cofactor. In terms of processing, the lysine tyrosylquinone cross-link (LTQ) is generated by condensation of the epsilon-amino group of a lysine with a topaquinone produced by oxidation of tyrosine. Proteolytically cleaved by BMP1 which removes the propeptide. Also proteolytically cleaved by ADAMTS2 and ADAMTS14, but not by ADAMTS3, at an additional cleavage site downstream of the BMP1 cleavage site. The propeptide plays a role in directing the deposition of this enzyme to elastic fibers, via interaction with tropoelastin. Cleavage by BMP1 to remove the propeptide does not increase enzymatic activity but increases binding to collagen. Cleavage by ADAMTS2 produces a form with reduced collagen-binding activity. Post-translationally, sulfated at Tyr-187 and also at either Tyr-183 or Tyr-184 which enhances binding to collagen. In terms of tissue distribution, heart, placenta, skeletal muscle, kidney, lung and pancreas.

It is found in the secreted. The protein localises to the extracellular space. It carries out the reaction L-lysyl-[protein] + O2 + H2O = (S)-2-amino-6-oxohexanoyl-[protein] + H2O2 + NH4(+). In terms of biological role, responsible for the post-translational oxidative deamination of peptidyl lysine residues in precursors to fibrous collagen and elastin. Regulator of Ras expression. May play a role in tumor suppression. Plays a role in the aortic wall architecture. The sequence is that of Protein-lysine 6-oxidase (LOX) from Homo sapiens (Human).